A 520-amino-acid polypeptide reads, in one-letter code: BTB/POZ domain-containing protein At3g50780 (520 aa).

Positions 43–68 (SHNSLTKHKQSSPALQPPKPEKKPSS) are disordered. One can recognise a BTB domain in the interval 127–196 (AKVILVGKQG…MYCKDMKQRL (70 aa)).

It functions in the pathway protein modification; protein ubiquitination. In terms of biological role, may act as a substrate-specific adapter of an E3 ubiquitin-protein ligase complex (CUL3-RBX1-BTB) which mediates the ubiquitination and subsequent proteasomal degradation of target proteins. This Arabidopsis thaliana (Mouse-ear cress) protein is BTB/POZ domain-containing protein At3g50780.